Consider the following 636-residue polypeptide: Protein BCAP (636 aa).

Coiled coils occupy residues 36–97 (LSCL…EQKE), 141–220 (ESEN…WNLQ), 249–325 (YKQR…HGKN), 377–484 (ISSE…ECQE), and 519–631 (LEEE…KMNS).

The protein belongs to the ODF2 family. In terms of tissue distribution, mainly expressed in trachea and testis. Not detected in bone marrow, bladder, leukocytes. Only weakly detected in tongue, stomach, brain and ovaries.

Its subcellular location is the cytoplasm. It is found in the cytoskeleton. The protein resides in the microtubule organizing center. The protein localises to the centrosome. It localises to the centriole. Its subcellular location is the centriolar satellite. It is found in the cilium basal body. Acts as a suppressor of ciliogenesis, specifically, the initiation of ciliogenesis. This is Protein BCAP from Homo sapiens (Human).